A 98-amino-acid chain; its full sequence is Large ribosomal subunit protein bL25 (98 aa).

Residues 1–23 are disordered; the sequence is MANFVLNAQARAEDKQGKGASRR.

This sequence belongs to the bacterial ribosomal protein bL25 family. Part of the 50S ribosomal subunit; part of the 5S rRNA/L5/L18/L25 subcomplex. Contacts the 5S rRNA. Binds to the 5S rRNA independently of L5 and L18.

In terms of biological role, this is one of the proteins that binds to the 5S RNA in the ribosome where it forms part of the central protuberance. The protein is Large ribosomal subunit protein bL25 of Acinetobacter baumannii (strain ATCC 17978 / DSM 105126 / CIP 53.77 / LMG 1025 / NCDC KC755 / 5377).